We begin with the raw amino-acid sequence, 356 residues long: Alpha-N-acetylneuraminide alpha-2,8-sialyltransferase (356 aa).

Topologically, residues 1–29 (MSPCGRARRQTSRGAMAVLAWKFPRTRLP) are cytoplasmic. The helical; Signal-anchor for type II membrane protein transmembrane segment at 30 to 48 (MGASALCVVVLCWLYIFPV) threads the bilayer. The Lumenal portion of the chain corresponds to 49–356 (YRLPNEKEIV…CEDTSLQPTS (308 aa)). N-linked (GlcNAc...) asparagine glycosylation is found at asparagine 71 and asparagine 119. 2 disulfides stabilise this stretch: cysteine 138–cysteine 287 and cysteine 152–cysteine 347. Asparagine 143 and asparagine 166 together coordinate CMP-N-acetyl-beta-neuraminate. 2 N-linked (GlcNAc...) asparagine glycosylation sites follow: asparagine 214 and asparagine 245. Positions 274, 275, 276, 296, and 310 each coordinate CMP-N-acetyl-beta-neuraminate. Histidine 322 functions as the Proton donor/acceptor in the catalytic mechanism.

This sequence belongs to the glycosyltransferase 29 family. As to expression, strongly expressed in melanoma cell lines, adult and fetal brain and to a lesser extent in adult and fetal lung.

It localises to the golgi apparatus membrane. It catalyses the reaction an N-acetyl-alpha-neuraminyl-(2-&gt;3)-beta-D-galactosyl derivative + CMP-N-acetyl-beta-neuraminate = an N-acetyl-alpha-neuraminyl-(2-&gt;8)-N-acetyl-alpha-neuraminyl-(2-&gt;3)-beta-D-galactosyl derivative + CMP + H(+). It carries out the reaction a ganglioside GM3 (d18:1(4E)) + CMP-N-acetyl-beta-neuraminate = a ganglioside GD3 (d18:1(4E)) + CMP + H(+). The enzyme catalyses a ganglioside GD3 (d18:1(4E)) + CMP-N-acetyl-beta-neuraminate = a ganglioside GT3 (d18:1(4E)) + CMP + H(+). The catalysed reaction is a ganglioside GD1a (d18:1(4E)) + CMP-N-acetyl-beta-neuraminate = a ganglioside GT1a (d18:1(4E)) + CMP + H(+). It catalyses the reaction a ganglioside GT1b (d18:1(4E)) + CMP-N-acetyl-beta-neuraminate = a ganglioside GQ1b (d18:1(4E)) + CMP + H(+). It carries out the reaction a ganglioside GM1b (d18:1(4E)) + CMP-N-acetyl-beta-neuraminate = a ganglioside GD1c (d18:1(4E)) + CMP + H(+). The enzyme catalyses a ganglioside GD3 + CMP-N-acetyl-beta-neuraminate = a ganglioside GT3 + CMP + H(+). The catalysed reaction is [alpha-N-acetylneuraminyl-(2-&gt;8)](n)-alpha-N-acetylneuraminyl-(2-&gt;8)-alpha-N-acetylneuraminyl-(2-&gt;3)-beta-D-galactosyl-(1-&gt;4)-beta-D-glucosyl-(1&lt;-&gt;1)-ceramide + CMP-N-acetyl-beta-neuraminate = [alpha-N-acetylneuraminyl-(2-&gt;8)](n+1)-alpha-N-acetylneuraminyl-(2-&gt;8)-alpha-N-acetylneuraminyl-(2-&gt;3)-beta-D-galactosyl-(1-&gt;4)-beta-D-glucosyl-(1&lt;-&gt;1)-ceramide + CMP + H(+). Its pathway is protein modification; protein glycosylation. The protein operates within lipid metabolism; sphingolipid metabolism. Its function is as follows. Catalyzes the addition of sialic acid in alpha 2,8-linkage to the sialic acid moiety of the ganglioside GM3 to form ganglioside GD3; gangliosides are a subfamily of complex glycosphingolipds that contain one or more residues of sialic acid. Can catalyze the addition of a second alpha-2,8-sialic acid to GD3 to form GT3. Can use GM1b, GD1a and GT1b as acceptor substrates to synthesize GD1c, GT1a and GQ1b respectively. Can synthesize unusual tetra- and pentasialylated lactosylceramide derivatives identified as GQ3 (II3Neu5Ac4-Gg2Cer) and GP3 (II3Neu5Ac5-Gg2Cer) in breast cancer cells. This is Alpha-N-acetylneuraminide alpha-2,8-sialyltransferase from Homo sapiens (Human).